Reading from the N-terminus, the 777-residue chain is Rho-GTPase-activating protein 8 (777 aa).

The 418-residue stretch at 3 to 420 folds into the F-BAR domain; sequence SSFSNGFWSK…YQEIIQPESD (418 aa). A coiled-coil region spans residues 117–172; the sequence is QKLQTSQQVLTNQIKSYEKKYYTLKKTKSAYYNKCRNLEDYEEESKESNETTSEAI. The 84-residue stretch at 213-296 folds into the DEP domain; that stretch reads VLQEIPLQDY…WKDKAFQFAG (84 aa). The region spanning 454–650 is the Rho-GAP domain; that stretch reads VDVEFLSHRD…DLLTYGPSIF (197 aa). Residues 667-709 form a disordered region; the sequence is LYQSSATPRSTDVSPTRPDSISSVRSHTAVESPRSSFEELQPS. Positions 668-692 are enriched in polar residues; that stretch reads YQSSATPRSTDVSPTRPDSISSVRS. Phosphoserine is present on residues Ser676 and Ser680. Thr682 is modified (phosphothreonine). Position 686 is a phosphoserine (Ser686). Thr694 bears the Phosphothreonine mark. At Ser698 the chain carries Phosphoserine.

Interacts with pak1/shk1. Post-translationally, phosphorylated by pak1/shk1.

It is found in the cytoplasm. Its function is as follows. Acts in signal transduction. Negatively regulates the pak1/shk1 control pathway. The sequence is that of Rho-GTPase-activating protein 8 (rga8) from Schizosaccharomyces pombe (strain 972 / ATCC 24843) (Fission yeast).